Consider the following 504-residue polypeptide: Calcium/calmodulin-dependent protein kinase type II (504 aa).

Residues 65 to 351 form the Protein kinase domain; it reads YQLIENLGDG…IHQFFQHPWI (287 aa). ATP is bound by residues 71–79 and Lys-94; that span reads LGDGAFSQV. Asp-188 (proton acceptor) is an active-site residue. Residue Thr-252 is modified to Phosphothreonine.

Belongs to the protein kinase superfamily. CAMK Ser/Thr protein kinase family. CaMK subfamily. In terms of assembly, interacts with sty1. It depends on Mg(2+) as a cofactor. Autophosphorylated.

The protein localises to the cytoplasm. Its subcellular location is the barrier septum. It is found in the forespore membrane. It localises to the ascus epiplasm. The catalysed reaction is L-seryl-[protein] + ATP = O-phospho-L-seryl-[protein] + ADP + H(+). It carries out the reaction L-threonyl-[protein] + ATP = O-phospho-L-threonyl-[protein] + ADP + H(+). Functionally, has a role in the regulation of G2/M transition during the mitotic cell cycle. This is Calcium/calmodulin-dependent protein kinase type II from Schizosaccharomyces pombe (strain 972 / ATCC 24843) (Fission yeast).